Reading from the N-terminus, the 114-residue chain is T cell receptor beta variable 3-1 (114 aa).

Residues 1-21 form the signal peptide; it reads MGCRLLCCVVFCLLQAGPLDT. One can recognise an Ig-like domain in the interval 22–114; it reads AVSQTPKYLV…SAVYFCASSQ (93 aa). Cysteines 42 and 110 form a disulfide. Asparagine 76 is a glycosylation site (N-linked (GlcNAc...) asparagine).

In terms of assembly, alpha-beta TR is a heterodimer composed of an alpha and beta chain; disulfide-linked. The alpha-beta TR is associated with the transmembrane signaling CD3 coreceptor proteins to form the TR-CD3 (TcR or TCR). The assembly of alpha-beta TR heterodimers with CD3 occurs in the endoplasmic reticulum where a single alpha-beta TR heterodimer associates with one CD3D-CD3E heterodimer, one CD3G-CD3E heterodimer and one CD247 homodimer forming a stable octameric structure. CD3D-CD3E and CD3G-CD3E heterodimers preferentially associate with TR alpha and TR beta chains, respectively. The association of the CD247 homodimer is the last step of TcR assembly in the endoplasmic reticulum and is required for transport to the cell surface.

The protein resides in the cell membrane. In terms of biological role, v region of the variable domain of T cell receptor (TR) beta chain that participates in the antigen recognition. Alpha-beta T cell receptors are antigen specific receptors which are essential to the immune response and are present on the cell surface of T lymphocytes. Recognize peptide-major histocompatibility (MH) (pMH) complexes that are displayed by antigen presenting cells (APC), a prerequisite for efficient T cell adaptive immunity against pathogens. Binding of alpha-beta TR to pMH complex initiates TR-CD3 clustering on the cell surface and intracellular activation of LCK that phosphorylates the ITAM motifs of CD3G, CD3D, CD3E and CD247 enabling the recruitment of ZAP70. In turn ZAP70 phosphorylates LAT, which recruits numerous signaling molecules to form the LAT signalosome. The LAT signalosome propagates signal branching to three major signaling pathways, the calcium, the mitogen-activated protein kinase (MAPK) kinase and the nuclear factor NF-kappa-B (NF-kB) pathways, leading to the mobilization of transcription factors that are critical for gene expression and essential for T cell growth and differentiation. The T cell repertoire is generated in the thymus, by V-(D)-J rearrangement. This repertoire is then shaped by intrathymic selection events to generate a peripheral T cell pool of self-MH restricted, non-autoaggressive T cells. Post-thymic interaction of alpha-beta TR with the pMH complexes shapes TR structural and functional avidity. The polypeptide is T cell receptor beta variable 3-1 (Homo sapiens (Human)).